The sequence spans 521 residues: UPF0053 protein BU323 (521 aa).

Helical transmembrane passes span 13–33, 49–69, 80–100, 125–145, 150–170, 185–205, and 207–227; these read LLTL…FVAI, IGLG…SWIV, FFSL…LLFK, FWAV…DAII, MVNQ…LMLL, VVVL…TEAL, and FCIP…IEIF. CBS domains follow at residues 311 to 370 and 374 to 434; these read MTPR…KIDA and SSKI…DADE.

The protein belongs to the UPF0053 family.

The protein resides in the cell membrane. This Buchnera aphidicola subsp. Acyrthosiphon pisum (strain APS) (Acyrthosiphon pisum symbiotic bacterium) protein is UPF0053 protein BU323.